The primary structure comprises 482 residues: Thymidine phosphorylase (482 aa).

A propeptide spanning residues 1–10 is cleaved from the precursor; that stretch reads MAALMTPGTG. The disordered stretch occupies residues 1–36; sequence MAALMTPGTGAPPAPGDFSGEGSQGLPDPSPEPKQL. Phosphothreonine is present on Thr6. Residues His116, Arg202, Ser217, and Lys221 each coordinate substrate. R-V-A-A-A-L-X(5,6)-L-G-R repeat units follow at residues 265 to 279 and 329 to 342; these read RVAAALTAMDKPLGR and RVAAALDDGSALGR. R-A-L-X-X-A-L-V-L repeat units lie at residues 393–401 and 453–461; these read RALPLALVL and RALQEALVL.

Belongs to the thymidine/pyrimidine-nucleoside phosphorylase family. In terms of assembly, homodimer.

It carries out the reaction thymidine + phosphate = 2-deoxy-alpha-D-ribose 1-phosphate + thymine. It participates in pyrimidine metabolism; dTMP biosynthesis via salvage pathway; dTMP from thymine: step 1/2. May have a role in maintaining the integrity of the blood vessels. Has growth promoting activity on endothelial cells, angiogenic activity in vivo and chemotactic activity on endothelial cells in vitro. In terms of biological role, catalyzes the reversible phosphorolysis of thymidine. The produced molecules are then utilized as carbon and energy sources or in the rescue of pyrimidine bases for nucleotide synthesis. This is Thymidine phosphorylase from Homo sapiens (Human).